The primary structure comprises 466 residues: Glycine--tRNA ligase (466 aa).

2 residues coordinate substrate: arginine 105 and glutamate 168. ATP is bound by residues 200 to 202 (RNE), 210 to 215 (FRTREF), 287 to 288 (EL), and 331 to 334 (GLTR). 215–219 (FEQME) contributes to the substrate binding site. 327–331 (EPAAG) serves as a coordination point for substrate.

The protein belongs to the class-II aminoacyl-tRNA synthetase family. In terms of assembly, homodimer.

It is found in the cytoplasm. The catalysed reaction is tRNA(Gly) + glycine + ATP = glycyl-tRNA(Gly) + AMP + diphosphate. Catalyzes the attachment of glycine to tRNA(Gly). This is Glycine--tRNA ligase from Nocardia farcinica (strain IFM 10152).